A 450-amino-acid polypeptide reads, in one-letter code: MENIHDLWNRVLGEIEKKISKPSFETWLKSTKAHSLRGDTLVIIAPNEFARDWLDSRYSRLIAETIYDITGEELLIKFITPPNQSEDDFEFQRSSKKHRKPYEESTDFPQSMLNPKYTFDTFVIGSGNRFAHAASLAVAEAPAKAYNPLFIYGGVGLGKTHLMHAIGHYVIEHNPSAKVVYLSSEKFTNEFINAIRDNRPDDFRNKYRNVDVLLIDDIQFLAGKEQTQEEFFHTFNTLHEESKQIVISSDRPPKEIPTLEDRLRSRFEWGLITDITPPDLETRIAILRKKAKAEGFDIPNEVMLYIANQIDSNIRELEGALIRVVAYSSLINKEITADLAAEALKDIIPSTKPKVITIQDIQRVVGQHFNIKLEDFKAKKRTKSVAFPRQIAMYLSRELTDCSLPKIGDEFGGRDHTTVIHAHEKISKLLQTDAQLQKHIKEIEEKLKQL.

The tract at residues Met1 to Ile79 is domain I, interacts with DnaA modulators. The domain II stretch occupies residues Ile79–Ser111. Positions Met112 to Ser328 are domain III, AAA+ region. The ATP site is built by Gly156, Gly158, Lys159, and Thr160. The tract at residues Ser329–Leu450 is domain IV, binds dsDNA.

The protein belongs to the DnaA family. As to quaternary structure, oligomerizes as a right-handed, spiral filament on DNA at oriC.

It localises to the cytoplasm. Its function is as follows. Plays an essential role in the initiation and regulation of chromosomal replication. ATP-DnaA binds to the origin of replication (oriC) to initiate formation of the DNA replication initiation complex once per cell cycle. Binds the DnaA box (a 9 base pair repeat at the origin) and separates the double-stranded (ds)DNA. Forms a right-handed helical filament on oriC DNA; dsDNA binds to the exterior of the filament while single-stranded (ss)DNA is stabiized in the filament's interior. The ATP-DnaA-oriC complex binds and stabilizes one strand of the AT-rich DNA unwinding element (DUE), permitting loading of DNA polymerase. After initiation quickly degrades to an ADP-DnaA complex that is not apt for DNA replication. Binds acidic phospholipids. This is Chromosomal replication initiator protein DnaA from Geobacillus sp. (strain WCH70).